The following is a 490-amino-acid chain: Cobyric acid synthase (490 aa).

In terms of domain architecture, GATase cobBQ-type spans 252–439; it reads RLKVVVPVLP…LHGLFESTAA (188 aa). The active-site Nucleophile is the cysteine 333. Histidine 431 is an active-site residue.

Belongs to the CobB/CobQ family. CobQ subfamily.

Its pathway is cofactor biosynthesis; adenosylcobalamin biosynthesis. Functionally, catalyzes amidations at positions B, D, E, and G on adenosylcobyrinic A,C-diamide. NH(2) groups are provided by glutamine, and one molecule of ATP is hydrogenolyzed for each amidation. In Pseudomonas paraeruginosa (strain DSM 24068 / PA7) (Pseudomonas aeruginosa (strain PA7)), this protein is Cobyric acid synthase.